We begin with the raw amino-acid sequence, 473 residues long: ATP synthase subunit beta (473 aa).

153–160 lines the ATP pocket; sequence GGAGVGKT.

This sequence belongs to the ATPase alpha/beta chains family. As to quaternary structure, F-type ATPases have 2 components, CF(1) - the catalytic core - and CF(0) - the membrane proton channel. CF(1) has five subunits: alpha(3), beta(3), gamma(1), delta(1), epsilon(1). CF(0) has three main subunits: a(1), b(2) and c(9-12). The alpha and beta chains form an alternating ring which encloses part of the gamma chain. CF(1) is attached to CF(0) by a central stalk formed by the gamma and epsilon chains, while a peripheral stalk is formed by the delta and b chains.

It is found in the cell inner membrane. It catalyses the reaction ATP + H2O + 4 H(+)(in) = ADP + phosphate + 5 H(+)(out). Produces ATP from ADP in the presence of a proton gradient across the membrane. The catalytic sites are hosted primarily by the beta subunits. The chain is ATP synthase subunit beta from Rickettsia conorii (strain ATCC VR-613 / Malish 7).